Consider the following 472-residue polypeptide: Glutamyl-tRNA(Gln) amidotransferase subunit A (472 aa).

Catalysis depends on charge relay system residues Lys-69 and Ser-144. Catalysis depends on Ser-168, which acts as the Acyl-ester intermediate.

This sequence belongs to the amidase family. GatA subfamily. As to quaternary structure, heterotrimer of A, B and C subunits.

The enzyme catalyses L-glutamyl-tRNA(Gln) + L-glutamine + ATP + H2O = L-glutaminyl-tRNA(Gln) + L-glutamate + ADP + phosphate + H(+). In terms of biological role, allows the formation of correctly charged Gln-tRNA(Gln) through the transamidation of misacylated Glu-tRNA(Gln) in organisms which lack glutaminyl-tRNA synthetase. The reaction takes place in the presence of glutamine and ATP through an activated gamma-phospho-Glu-tRNA(Gln). The protein is Glutamyl-tRNA(Gln) amidotransferase subunit A of Sulfurisphaera tokodaii (strain DSM 16993 / JCM 10545 / NBRC 100140 / 7) (Sulfolobus tokodaii).